We begin with the raw amino-acid sequence, 930 residues long: Translation initiation factor IF-2 (930 aa).

The segment covering 50–67 (FKPAAAPKVEAKPAAPKV) has biased composition (low complexity). Disordered stretches follow at residues 50-217 (FKPA…SSEE) and 260-346 (EVVP…HELP). Basic and acidic residues-rich tracts occupy residues 68–90 (SAEK…EAKP) and 110–125 (FKAE…AERR). Residues 129–141 (KGNNRDQQQNGNR) show a composition bias toward low complexity. Composition is skewed to basic and acidic residues over residues 157 to 167 (RDNRRFNDQAK) and 262 to 295 (VPEK…DGPR). Over residues 309–318 (NQKNSNWNNN) the composition is skewed to low complexity. Positions 337–346 (VTERKFHELP) are enriched in basic and acidic residues. The tr-type G domain maps to 432 to 599 (ERPPVVTIMG…TVLLVAEIQE (168 aa)). Residues 441-448 (GHVDHGKT) are G1. 441–448 (GHVDHGKT) is a binding site for GTP. Residues 466–470 (GITQH) are G2. A G3 region spans residues 487–490 (DTPG). Residues 487 to 491 (DTPGH) and 541 to 544 (NKID) contribute to the GTP site. Residues 541–544 (NKID) are G4. A G5 region spans residues 577 to 579 (SAK).

This sequence belongs to the TRAFAC class translation factor GTPase superfamily. Classic translation factor GTPase family. IF-2 subfamily.

The protein localises to the cytoplasm. One of the essential components for the initiation of protein synthesis. Protects formylmethionyl-tRNA from spontaneous hydrolysis and promotes its binding to the 30S ribosomal subunits. Also involved in the hydrolysis of GTP during the formation of the 70S ribosomal complex. The chain is Translation initiation factor IF-2 from Streptococcus pneumoniae (strain Taiwan19F-14).